We begin with the raw amino-acid sequence, 328 residues long: tRNA uridine(34) hydroxylase (328 aa).

In terms of domain architecture, Rhodanese spans 122–218; the sequence is QENRCLVLDV…YGLKMGTGKW (97 aa). C178 acts as the Cysteine persulfide intermediate in catalysis.

This sequence belongs to the TrhO family.

It catalyses the reaction uridine(34) in tRNA + AH2 + O2 = 5-hydroxyuridine(34) in tRNA + A + H2O. Catalyzes oxygen-dependent 5-hydroxyuridine (ho5U) modification at position 34 in tRNAs. The chain is tRNA uridine(34) hydroxylase from Chlamydia muridarum (strain MoPn / Nigg).